Consider the following 148-residue polypeptide: Large ribosomal subunit protein bL9 (148 aa).

Belongs to the bacterial ribosomal protein bL9 family.

Its function is as follows. Binds to the 23S rRNA. The polypeptide is Large ribosomal subunit protein bL9 (Bacillus cereus (strain B4264)).